A 309-amino-acid polypeptide reads, in one-letter code: Putative pyridoxal kinase C6F6.11c (309 aa).

Substrate contacts are provided by Ser-12 and Tyr-123. ATP-binding positions include 182–183 and 209–221; these read SS and LIPV…RGTG. Asp-222 is a binding site for substrate.

Belongs to the pyridoxine kinase family. A divalent metal cation is required as a cofactor.

It localises to the cytoplasm. The protein localises to the nucleus. The enzyme catalyses pyridoxal + ATP = pyridoxal 5'-phosphate + ADP + H(+). Required for synthesis of pyridoxal-5-phosphate from vitamin B6. This chain is Putative pyridoxal kinase C6F6.11c, found in Schizosaccharomyces pombe (strain 972 / ATCC 24843) (Fission yeast).